A 422-amino-acid polypeptide reads, in one-letter code: Putative polyketide beta-ketoacyl synthase 1 (422 aa).

In terms of domain architecture, Ketosynthase family 3 (KS3) spans 2-416 (TRRVAVTGIG…GFQSAVLLTG (415 aa)). Active-site for beta-ketoacyl synthase activity residues include C169, H309, and H346.

The protein belongs to the thiolase-like superfamily. Beta-ketoacyl-ACP synthases family.

It participates in antibiotic biosynthesis; curamycin biosynthesis. This is Putative polyketide beta-ketoacyl synthase 1 (curA) from Streptomyces cyaneus (Streptomyces curacoi).